The primary structure comprises 205 residues: MTKRSEAKYKIDRRMGQNIWGRPKSPVNRREYGPGQHGQRRKGKLSDFGVQLRAKQKLKGYYANISERQFHGIYVEAGRLKGDTGENLIGILERRLDTVVFRAKFVSTMFAARQFINHGHIKVNGRKVNIASYQVKPGDVIEVKEASKQLAVVLEATQLAERDVPDYIEADHSKMTAKFIRIPALSDVPFAVQMEPHLIVEFYSR.

The tract at residues asparagine 18–serine 46 is disordered. The region spanning arginine 94 to leucine 154 is the S4 RNA-binding domain.

The protein belongs to the universal ribosomal protein uS4 family. As to quaternary structure, part of the 30S ribosomal subunit. Contacts protein S5. The interaction surface between S4 and S5 is involved in control of translational fidelity.

Functionally, one of the primary rRNA binding proteins, it binds directly to 16S rRNA where it nucleates assembly of the body of the 30S subunit. Its function is as follows. With S5 and S12 plays an important role in translational accuracy. This Bradyrhizobium sp. (strain ORS 278) protein is Small ribosomal subunit protein uS4.